Consider the following 809-residue polypeptide: Glycerol-3-phosphate acyltransferase (809 aa).

Positions 309–314 (HRSHMD) match the HXXXXD motif motif.

The protein belongs to the GPAT/DAPAT family.

It localises to the cell inner membrane. The catalysed reaction is sn-glycerol 3-phosphate + an acyl-CoA = a 1-acyl-sn-glycero-3-phosphate + CoA. Its pathway is phospholipid metabolism; CDP-diacylglycerol biosynthesis; CDP-diacylglycerol from sn-glycerol 3-phosphate: step 1/3. This Shewanella oneidensis (strain ATCC 700550 / JCM 31522 / CIP 106686 / LMG 19005 / NCIMB 14063 / MR-1) protein is Glycerol-3-phosphate acyltransferase.